The chain runs to 252 residues: MIKKRIIPCLDVKDGRVVKGIQFKGLRDIGNPVDLAMYYNEAGADELVFLDISKTEEGHSLMLEVIEQTASRLFIPLTVGGGIQSLDDITQLLNHGADKVSLNSSALKNPQLIKQASDKFGRQCICIAIDSYYDPERKAHYCCTHGGKKLTNIKVYDWVQQVEQLGAGELLVTSMGHDGMKQGFDIEHLAKIKSLVNIPIIASGGGGNAQHFVELFDQTDVSAGLAASILHDRETTVQSIKEAIRQGGIAVR.

Active-site residues include Asp11 and Asp130.

This sequence belongs to the HisA/HisF family. Heterodimer of HisH and HisF.

Its subcellular location is the cytoplasm. The enzyme catalyses 5-[(5-phospho-1-deoxy-D-ribulos-1-ylimino)methylamino]-1-(5-phospho-beta-D-ribosyl)imidazole-4-carboxamide + L-glutamine = D-erythro-1-(imidazol-4-yl)glycerol 3-phosphate + 5-amino-1-(5-phospho-beta-D-ribosyl)imidazole-4-carboxamide + L-glutamate + H(+). It participates in amino-acid biosynthesis; L-histidine biosynthesis; L-histidine from 5-phospho-alpha-D-ribose 1-diphosphate: step 5/9. Its function is as follows. IGPS catalyzes the conversion of PRFAR and glutamine to IGP, AICAR and glutamate. The HisF subunit catalyzes the cyclization activity that produces IGP and AICAR from PRFAR using the ammonia provided by the HisH subunit. The protein is Imidazole glycerol phosphate synthase subunit HisF of Staphylococcus aureus (strain MRSA252).